Here is a 124-residue protein sequence, read N- to C-terminus: Large ribosomal subunit protein bL12 (124 aa).

Positions 93–124 (GAPSTVKEGASKDEAEEAKKKLEEAGASVELK) are disordered. Residues 101-116 (GASKDEAEEAKKKLEE) are compositionally biased toward basic and acidic residues.

The protein belongs to the bacterial ribosomal protein bL12 family. Homodimer. Part of the ribosomal stalk of the 50S ribosomal subunit. Forms a multimeric L10(L12)X complex, where L10 forms an elongated spine to which 2 to 4 L12 dimers bind in a sequential fashion. Binds GTP-bound translation factors.

Functionally, forms part of the ribosomal stalk which helps the ribosome interact with GTP-bound translation factors. Is thus essential for accurate translation. This chain is Large ribosomal subunit protein bL12, found in Marinobacter nauticus (strain ATCC 700491 / DSM 11845 / VT8) (Marinobacter aquaeolei).